The sequence spans 227 residues: Uracil-DNA glycosylase (227 aa).

Aspartate 68 (proton acceptor) is an active-site residue.

Belongs to the uracil-DNA glycosylase (UDG) superfamily. UNG family.

It is found in the cytoplasm. It carries out the reaction Hydrolyzes single-stranded DNA or mismatched double-stranded DNA and polynucleotides, releasing free uracil.. Its function is as follows. Excises uracil residues from the DNA which can arise as a result of misincorporation of dUMP residues by DNA polymerase or due to deamination of cytosine. The sequence is that of Uracil-DNA glycosylase from Mycobacterium sp. (strain JLS).